A 290-amino-acid chain; its full sequence is GTPase Era (290 aa).

Residues 2–169 (KSGFAAILGR…KNKIYENFSE (168 aa)) enclose the Era-type G domain. Positions 10–17 (GRPSTGKS) are G1. Residue 10–17 (GRPSTGKS) participates in GTP binding. Positions 36-40 (QTTRN) are G2. Positions 57-60 (DTPG) are G3. Residues 57–61 (DTPGF) and 119–122 (NKID) contribute to the GTP site. Residues 119-122 (NKID) form a G4 region. The G5 stretch occupies residues 148–150 (ISA). One can recognise a KH type-2 domain in the interval 200-276 (LKEELPYSLY…NLFLQVKLKK (77 aa)).

Belongs to the TRAFAC class TrmE-Era-EngA-EngB-Septin-like GTPase superfamily. Era GTPase family. In terms of assembly, monomer.

The protein resides in the cytoplasm. It is found in the cell inner membrane. In terms of biological role, an essential GTPase that binds both GDP and GTP, with rapid nucleotide exchange. Plays a role in 16S rRNA processing and 30S ribosomal subunit biogenesis and possibly also in cell cycle regulation and energy metabolism. The polypeptide is GTPase Era (Borreliella burgdorferi (strain ATCC 35210 / DSM 4680 / CIP 102532 / B31) (Borrelia burgdorferi)).